We begin with the raw amino-acid sequence, 270 residues long: Type III pantothenate kinase (270 aa).

16–23 (EIGNTTAM) is an ATP binding site. Substrate-binding positions include Tyr-106 and 113 to 116 (GADR). Residue Asp-115 is the Proton acceptor of the active site. Asp-136 serves as a coordination point for K(+). Thr-139 lines the ATP pocket. A substrate-binding site is contributed by Thr-191.

Belongs to the type III pantothenate kinase family. As to quaternary structure, homodimer. NH4(+) is required as a cofactor. Requires K(+) as cofactor.

It is found in the cytoplasm. The enzyme catalyses (R)-pantothenate + ATP = (R)-4'-phosphopantothenate + ADP + H(+). It functions in the pathway cofactor biosynthesis; coenzyme A biosynthesis; CoA from (R)-pantothenate: step 1/5. Catalyzes the phosphorylation of pantothenate (Pan), the first step in CoA biosynthesis. The chain is Type III pantothenate kinase from Chlorobium luteolum (strain DSM 273 / BCRC 81028 / 2530) (Pelodictyon luteolum).